Consider the following 199-residue polypeptide: Recombination protein RecR (199 aa).

The C4-type zinc finger occupies 59–74; that stretch reads CLNCGNVGTSDICALC. In terms of domain architecture, Toprim spans 82–176; the sequence is GELCVVEDVA…KLTSLAQGVP (95 aa).

This sequence belongs to the RecR family.

May play a role in DNA repair. It seems to be involved in an RecBC-independent recombinational process of DNA repair. It may act with RecF and RecO. This Ruegeria sp. (strain TM1040) (Silicibacter sp.) protein is Recombination protein RecR.